A 409-amino-acid chain; its full sequence is tRNA-specific 2-thiouridylase MnmA (409 aa).

ATP-binding positions include 40–47 (GLSGGVDS) and L66. Catalysis depends on C127, which acts as the Nucleophile. C127 and C237 are oxidised to a cystine. Residue G152 coordinates ATP. An interaction with tRNA region spans residues 187-189 (KDQ). The active-site Cysteine persulfide intermediate is the C237. Positions 342–343 (RY) are interaction with tRNA.

The protein belongs to the MnmA/TRMU family.

It localises to the cytoplasm. The catalysed reaction is S-sulfanyl-L-cysteinyl-[protein] + uridine(34) in tRNA + AH2 + ATP = 2-thiouridine(34) in tRNA + L-cysteinyl-[protein] + A + AMP + diphosphate + H(+). In terms of biological role, catalyzes the 2-thiolation of uridine at the wobble position (U34) of tRNA, leading to the formation of s(2)U34. The chain is tRNA-specific 2-thiouridylase MnmA from Prochlorococcus marinus (strain MIT 9313).